Reading from the N-terminus, the 156-residue chain is Ribosome maturation factor RimP (156 aa).

Belongs to the RimP family.

It localises to the cytoplasm. Its function is as follows. Required for maturation of 30S ribosomal subunits. The chain is Ribosome maturation factor RimP from Oenococcus oeni (strain ATCC BAA-331 / PSU-1).